The sequence spans 118 residues: Large ribosomal subunit protein uL24 (118 aa).

This sequence belongs to the universal ribosomal protein uL24 family. In terms of assembly, part of the 50S ribosomal subunit.

Its function is as follows. One of two assembly initiator proteins, it binds directly to the 5'-end of the 23S rRNA, where it nucleates assembly of the 50S subunit. One of the proteins that surrounds the polypeptide exit tunnel on the outside of the subunit. This chain is Large ribosomal subunit protein uL24, found in Prochlorococcus marinus (strain NATL2A).